We begin with the raw amino-acid sequence, 602 residues long: Elongation factor 4 (602 aa).

The 183-residue stretch at 7–189 (KYIRNFSIVA…AIVNKVPAPE (183 aa)) folds into the tr-type G domain. GTP contacts are provided by residues 19 to 24 (DHGKST) and 136 to 139 (NKID).

Belongs to the TRAFAC class translation factor GTPase superfamily. Classic translation factor GTPase family. LepA subfamily.

Its subcellular location is the cell membrane. It catalyses the reaction GTP + H2O = GDP + phosphate + H(+). Required for accurate and efficient protein synthesis under certain stress conditions. May act as a fidelity factor of the translation reaction, by catalyzing a one-codon backward translocation of tRNAs on improperly translocated ribosomes. Back-translocation proceeds from a post-translocation (POST) complex to a pre-translocation (PRE) complex, thus giving elongation factor G a second chance to translocate the tRNAs correctly. Binds to ribosomes in a GTP-dependent manner. This Clostridium botulinum (strain Okra / Type B1) protein is Elongation factor 4.